Here is a 458-residue protein sequence, read N- to C-terminus: Paired box protein Pax-8 (458 aa).

The paired DNA-binding region spans G18–K144. Positions G21–T77 are PAI subdomain. Residues K96–K144 are RED subdomain. The disordered stretch occupies residues P198–S217.

Its subcellular location is the nucleus. Functionally, probable transcription factor. Involved in kidney development, acting synergistically with lhx1/lim-1 to establish the pronephric primordium in late gastrulae/early neurulae. The chain is Paired box protein Pax-8 from Xenopus tropicalis (Western clawed frog).